The primary structure comprises 353 residues: (S)-8-amino-7-oxononanoate synthase BioU (353 aa).

An NAD(+)-binding site is contributed by 10–14 (GTGGI). K147 functions as the Nucleophile in the catalytic mechanism. Allysine is present on K147. NAD(+) is bound at residue 214-215 (GT). Catalysis depends on E218, which acts as the Proton acceptor. Catalysis depends on H222, which acts as the Proton donor and proton acceptor.

Belongs to the BioU family. Monomer.

The enzyme catalyses (8S)-8-amino-7-oxononanoate + L-lysyl-[protein] + CO2 = (S)-2-amino-6-oxohexanoyl-[protein] + (7R,8S)-8-amino-7-(carboxyamino)nonanoate + 2 H(+). The catalysed reaction is (8S)-8-amino-7-oxononanoate + L-lysyl-[protein] + NADPH + H(+) = N(6)-[(2S,3R)-2-amino-8-carboxyoctan-3-yl]-L-lysyl-[protein] + NADP(+) + H2O. It carries out the reaction N(6)-[(2S,3R)-2-amino-8-carboxyoctan-3-yl]-L-lysyl-[protein] + CO2 + NADP(+) + H2O = (S)-2-amino-6-oxohexanoyl-[protein] + (7R,8S)-8-amino-7-(carboxyamino)nonanoate + NADPH + 3 H(+). It catalyses the reaction (8S)-8-amino-7-oxononanoate + L-lysyl-[protein] + NADH + H(+) = N(6)-[(2S,3R)-2-amino-8-carboxyoctan-3-yl]-L-lysyl-[protein] + NAD(+) + H2O. The enzyme catalyses N(6)-[(2S,3R)-2-amino-8-carboxyoctan-3-yl]-L-lysyl-[protein] + CO2 + NAD(+) + H2O = (S)-2-amino-6-oxohexanoyl-[protein] + (7R,8S)-8-amino-7-(carboxyamino)nonanoate + NADH + 3 H(+). It functions in the pathway cofactor biosynthesis; biotin biosynthesis. Its function is as follows. A 'suicide' enzyme that participates in biotin synthesis. Catalyzes the formation of (S)-8-amino-7-oxononanoate (DAN-carbamic acid) from (7R,8S)-8-amino-7-(carboxyamino)nonanoate (DAN), a function equivalent to the cannonical BioA reaction and the first half-reaction of BioD. The cellular requirement for biotin is thought be low enough that this single turnover enzyme supplies a sufficient amount of the cofactor. Overall it catalyzes three reactions: formation of a covalent linkage with 8-amino-7-oxononanoate to yield a BioU-DAN conjugate at the epsilon-amino group of Lys124 of BioU using NAD(P)H, carboxylation of the conjugate to form BioU-DAN-carbamic acid, and release of DAN-carbamic acid using NAD(P)+. Complements a bioA deletion in E.coli. This is (S)-8-amino-7-oxononanoate synthase BioU from Haloferax mediterranei (strain ATCC 33500 / DSM 1411 / JCM 8866 / NBRC 14739 / NCIMB 2177 / R-4) (Halobacterium mediterranei).